We begin with the raw amino-acid sequence, 362 residues long: Cytochrome c oxidase subunit 2 (362 aa).

Positions 1–28 are cleaved as a signal peptide; sequence MEQQEKRGTVRKALLGSVIGFGGLALAG. C29 carries the N-palmitoyl cysteine lipid modification. C29 is lipidated: S-diacylglycerol cysteine. 2 consecutive transmembrane segments (helical) span residues 60-80 and 107-127; these read FWVW…GLFI and IPLE…LFFF. A disordered region spans residues 171 to 206; it reads SDYVGTDEKRQEAAEKTKFDQGGDNPNPINGRSKTD. The segment covering 176-191 has biased composition (basic and acidic residues); the sequence is TDEKRQEAAEKTKFDQ. The span at 197–206 shows a compositional bias: polar residues; that stretch reads NPINGRSKTD. Residues H246, C287, E289, C291, H295, and M298 each coordinate Cu cation. Positions 325 to 362 are disordered; it reads NSDALKSIGEAPYATSTHPFNSERATRDGANFDDTAAA.

This sequence belongs to the cytochrome c oxidase subunit 2 family. As to quaternary structure, associates with subunits I, III and IV to form cytochrome c oxidase. It depends on binuclear copper center (CuA) as a cofactor.

It is found in the cell membrane. The enzyme catalyses 4 Fe(II)-[cytochrome c] + O2 + 8 H(+)(in) = 4 Fe(III)-[cytochrome c] + 2 H2O + 4 H(+)(out). Its function is as follows. Subunits I and II form the functional core of the enzyme complex. Electrons originating in cytochrome c are transferred via heme a and Cu(A) to the binuclear center formed by heme a3 and Cu(B). The sequence is that of Cytochrome c oxidase subunit 2 (ctaC) from Corynebacterium diphtheriae (strain ATCC 700971 / NCTC 13129 / Biotype gravis).